The chain runs to 213 residues: AN1-type zinc finger protein 5 (213 aa).

An A20-type zinc finger spans residues 8 to 42 (TPGPMLCSTGCGFYGNPRTNGMCSVCYKEHLQRQQ). Residues Cys14, Cys18, Cys30, and Cys33 each coordinate Zn(2+). Positions 39–149 (QRQQNSGRMS…EEKAPELPKP (111 aa)) are disordered. The span at 40–66 (RQQNSGRMSPMGTASGSNSPTSDSASV) shows a compositional bias: polar residues. 2 positions are modified to phosphoserine: Ser48 and Ser58. Residues 120–138 (SEPVVTQPSPSVSQPSSSQ) show a composition bias toward low complexity. Basic and acidic residues predominate over residues 139–148 (SEEKAPELPK). The AN1-type zinc-finger motif lies at 148–194 (KPKKNRCFMCRKKVGLTGFDCRCGNLFCGLHRYSDKHNCPYDYKAEA). Residues Cys154, Cys157, Cys168, Cys170, Cys175, His178, His184, and Cys186 each coordinate Zn(2+). N6-acetyllysine is present on Lys209.

Homooligomer and/or heterooligomer. Interacts (via A20-type domain) with IKBKG and RIPK1 and with TRAF6 (via AN1-type domain). Interacts with ubiquitin and polyubiquitinated proteins. Identified in a heterotrimeric complex with ubiquitin and SQSTM1, where ZFAND5 and SQSTM1 both interact with the same ubiquitin molecule.

The protein resides in the cytoplasm. Involved in protein degradation via the ubiquitin-proteasome system. May act by anchoring ubiquitinated proteins to the proteasome. Plays a role in ubiquitin-mediated protein degradation during muscle atrophy. Plays a role in the regulation of NF-kappa-B activation and apoptosis. Inhibits NF-kappa-B activation triggered by overexpression of RIPK1 and TRAF6 but not of RELA. Also inhibits tumor necrosis factor (TNF), IL-1 and TLR4-induced NF-kappa-B activation in a dose-dependent manner. Overexpression sensitizes cells to TNF-induced apoptosis. Is a potent inhibitory factor for osteoclast differentiation. This Rattus norvegicus (Rat) protein is AN1-type zinc finger protein 5 (Zfand5).